Consider the following 285-residue polypeptide: Phycobilisome 31.6 kDa linker polypeptide, phycocyanin-associated, rod (285 aa).

The PBS-linker domain maps to 1–180; sequence MPITTAASRL…LYRGYATSDR (180 aa).

This sequence belongs to the phycobilisome linker protein family.

It is found in the cellular thylakoid membrane. Rod linker protein, associated with phycocyanin. Linker polypeptides determine the state of aggregation and the location of the disk-shaped phycobiliprotein units within the phycobilisome and modulate their spectroscopic properties in order to mediate a directed and optimal energy transfer. The protein is Phycobilisome 31.6 kDa linker polypeptide, phycocyanin-associated, rod (cpcI3) of Microchaete diplosiphon (Fremyella diplosiphon).